The sequence spans 166 residues: Urease accessory protein UreE (166 aa).

The disordered stretch occupies residues 132–156; the sequence is FQPEHGAYGGGHHHSRHGDEDFNYP.

This sequence belongs to the UreE family.

It localises to the cytoplasm. Functionally, involved in urease metallocenter assembly. Binds nickel. Probably functions as a nickel donor during metallocenter assembly. The protein is Urease accessory protein UreE of Pseudomonas fluorescens (strain ATCC BAA-477 / NRRL B-23932 / Pf-5).